A 177-amino-acid polypeptide reads, in one-letter code: Large ribosomal subunit protein uL6 (177 aa).

Belongs to the universal ribosomal protein uL6 family. Part of the 50S ribosomal subunit.

Functionally, this protein binds to the 23S rRNA, and is important in its secondary structure. It is located near the subunit interface in the base of the L7/L12 stalk, and near the tRNA binding site of the peptidyltransferase center. The chain is Large ribosomal subunit protein uL6 from Klebsiella pneumoniae subsp. pneumoniae (strain ATCC 700721 / MGH 78578).